Reading from the N-terminus, the 208-residue chain is Thiamine-phosphate synthase (208 aa).

Residues 37–39 (QVR) and N70 each bind 4-amino-2-methyl-5-(diphosphooxymethyl)pyrimidine. Mg(2+)-binding residues include D71 and D90. Residue T109 participates in 4-amino-2-methyl-5-(diphosphooxymethyl)pyrimidine binding. Residue 135–137 (TTS) coordinates 2-[(2R,5Z)-2-carboxy-4-methylthiazol-5(2H)-ylidene]ethyl phosphate. K138 contacts 4-amino-2-methyl-5-(diphosphooxymethyl)pyrimidine. A166 provides a ligand contact to 2-[(2R,5Z)-2-carboxy-4-methylthiazol-5(2H)-ylidene]ethyl phosphate.

This sequence belongs to the thiamine-phosphate synthase family. Mg(2+) is required as a cofactor.

The enzyme catalyses 2-[(2R,5Z)-2-carboxy-4-methylthiazol-5(2H)-ylidene]ethyl phosphate + 4-amino-2-methyl-5-(diphosphooxymethyl)pyrimidine + 2 H(+) = thiamine phosphate + CO2 + diphosphate. It carries out the reaction 2-(2-carboxy-4-methylthiazol-5-yl)ethyl phosphate + 4-amino-2-methyl-5-(diphosphooxymethyl)pyrimidine + 2 H(+) = thiamine phosphate + CO2 + diphosphate. It catalyses the reaction 4-methyl-5-(2-phosphooxyethyl)-thiazole + 4-amino-2-methyl-5-(diphosphooxymethyl)pyrimidine + H(+) = thiamine phosphate + diphosphate. The protein operates within cofactor biosynthesis; thiamine diphosphate biosynthesis; thiamine phosphate from 4-amino-2-methyl-5-diphosphomethylpyrimidine and 4-methyl-5-(2-phosphoethyl)-thiazole: step 1/1. Functionally, condenses 4-methyl-5-(beta-hydroxyethyl)thiazole monophosphate (THZ-P) and 2-methyl-4-amino-5-hydroxymethyl pyrimidine pyrophosphate (HMP-PP) to form thiamine monophosphate (TMP). This chain is Thiamine-phosphate synthase, found in Salinispora tropica (strain ATCC BAA-916 / DSM 44818 / JCM 13857 / NBRC 105044 / CNB-440).